The chain runs to 112 residues: Cell cycle protein GpsB (112 aa).

A coiled-coil region spans residues leucine 32–serine 75.

Belongs to the GpsB family. As to quaternary structure, forms polymers through the coiled coil domains. Interacts with PBP1, MreC and EzrA.

The protein resides in the cytoplasm. Functionally, divisome component that associates with the complex late in its assembly, after the Z-ring is formed, and is dependent on DivIC and PBP2B for its recruitment to the divisome. Together with EzrA, is a key component of the system that regulates PBP1 localization during cell cycle progression. Its main role could be the removal of PBP1 from the cell pole after pole maturation is completed. Also contributes to the recruitment of PBP1 to the division complex. Not essential for septum formation. The sequence is that of Cell cycle protein GpsB from Streptococcus mutans serotype c (strain ATCC 700610 / UA159).